Reading from the N-terminus, the 511-residue chain is Rab proteins geranylgeranyltransferase component A (511 aa).

It belongs to the Rab GDI family.

It is found in the cytoplasm. Its subcellular location is the perinuclear region. The protein resides in the cytoskeleton. The protein localises to the spindle pole. Functionally, binds unprenylated Rab proteins, presents it to the catalytic component B, and remains bound to it after the geranylgeranyl transfer reaction. The component A is thought to be regenerated by transferring its prenylated Rab to a protein acceptor. This Drosophila melanogaster (Fruit fly) protein is Rab proteins geranylgeranyltransferase component A.